The primary structure comprises 144 residues: MTIERTFSIVKPDAVKRNLIGAIYRRIEKTGMQVVAAKMLSLTKEQAQGFYAEHEGKEFFDALVEYMTSGPVMVQVLEGESVITRYRELMGKTNPDEAACGSLRSDYAISMRYNSVHGSDSPESAAREIAYFFVEDEICPRPAE.

ATP contacts are provided by Lys-11, Phe-59, Arg-87, Thr-93, Arg-104, and Asn-114. His-117 acts as the Pros-phosphohistidine intermediate in catalysis.

Belongs to the NDK family. Homotetramer. It depends on Mg(2+) as a cofactor.

Its subcellular location is the cytoplasm. The enzyme catalyses a 2'-deoxyribonucleoside 5'-diphosphate + ATP = a 2'-deoxyribonucleoside 5'-triphosphate + ADP. It catalyses the reaction a ribonucleoside 5'-diphosphate + ATP = a ribonucleoside 5'-triphosphate + ADP. In terms of biological role, major role in the synthesis of nucleoside triphosphates other than ATP. The ATP gamma phosphate is transferred to the NDP beta phosphate via a ping-pong mechanism, using a phosphorylated active-site intermediate. The chain is Nucleoside diphosphate kinase from Aliivibrio salmonicida (strain LFI1238) (Vibrio salmonicida (strain LFI1238)).